The following is a 790-amino-acid chain: Histone-lysine N-methyltransferase, H3 lysine-9 specific SUVH6 (790 aa).

The interval glutamine 251–asparagine 271 is disordered. A compositionally biased stretch (low complexity) spans glycine 256–serine 268. The 153-residue stretch at glycine 330–arginine 482 folds into the YDG domain. The Pre-SET domain maps to lysine 551 to glycine 613. 10 residues coordinate Zn(2+): cysteine 553, cysteine 554, cysteine 555, cysteine 559, cysteine 567, cysteine 569, cysteine 595, cysteine 599, cysteine 601, and cysteine 605. The SET domain maps to leucine 616–asparagine 760. S-adenosyl-L-methionine contacts are provided by residues arginine 626–tryptophan 628, aspartate 662, tyrosine 664, arginine 714, and asparagine 717–histidine 718. The Zn(2+) site is built by cysteine 720, cysteine 778, cysteine 780, and cysteine 785. Positions lysine 774–tyrosine 790 constitute a Post-SET domain.

This sequence belongs to the class V-like SAM-binding methyltransferase superfamily. Histone-lysine methyltransferase family. Suvar3-9 subfamily.

It localises to the nucleus. It is found in the chromosome. Its subcellular location is the centromere. It catalyses the reaction N(6)-methyl-L-lysyl(9)-[histone H3] + S-adenosyl-L-methionine = N(6),N(6)-dimethyl-L-lysyl(9)-[histone H3] + S-adenosyl-L-homocysteine + H(+). The catalysed reaction is L-lysyl(9)-[histone H3] + S-adenosyl-L-methionine = N(6)-methyl-L-lysyl(9)-[histone H3] + S-adenosyl-L-homocysteine + H(+). Histone methyltransferase. Methylates 'Lys-9' of histone H3. H3 'Lys-9' methylation represents a specific tag for epigenetic transcriptional repression. Seems to act preferentially on dsMRNA. The protein is Histone-lysine N-methyltransferase, H3 lysine-9 specific SUVH6 (SUVH6) of Arabidopsis thaliana (Mouse-ear cress).